The chain runs to 303 residues: Protoheme IX farnesyltransferase (303 aa).

9 consecutive transmembrane segments (helical) span residues 25–45 (MGLV…AVVM), 54–74 (IPQI…ACAL), 104–124 (LLLL…LLNI), 125–145 (PSGV…SIWS), 151–171 (WNTV…WVAI), 179–199 (AIAL…ALAI), 227–247 (FIWL…GVVF), 248–268 (VVLA…TFKK), and 280–300 (FIYS…VSLL).

This sequence belongs to the UbiA prenyltransferase family. Protoheme IX farnesyltransferase subfamily. In terms of assembly, interacts with CtaA.

The protein localises to the cell membrane. It carries out the reaction heme b + (2E,6E)-farnesyl diphosphate + H2O = Fe(II)-heme o + diphosphate. It functions in the pathway porphyrin-containing compound metabolism; heme O biosynthesis; heme O from protoheme: step 1/1. Its function is as follows. Converts heme B (protoheme IX) to heme O by substitution of the vinyl group on carbon 2 of heme B porphyrin ring with a hydroxyethyl farnesyl side group. The polypeptide is Protoheme IX farnesyltransferase (Staphylococcus aureus (strain bovine RF122 / ET3-1)).